A 282-amino-acid chain; its full sequence is Lipoyl synthase (282 aa).

The [4Fe-4S] cluster site is built by cysteine 37, cysteine 42, cysteine 48, cysteine 63, cysteine 67, cysteine 70, and serine 275. The region spanning 49 to 264 (WSRGTATFMI…RLVGIEKGFR (216 aa)) is the Radical SAM core domain.

This sequence belongs to the radical SAM superfamily. Lipoyl synthase family. It depends on [4Fe-4S] cluster as a cofactor.

The protein resides in the cytoplasm. The catalysed reaction is [[Fe-S] cluster scaffold protein carrying a second [4Fe-4S](2+) cluster] + N(6)-octanoyl-L-lysyl-[protein] + 2 oxidized [2Fe-2S]-[ferredoxin] + 2 S-adenosyl-L-methionine + 4 H(+) = [[Fe-S] cluster scaffold protein] + N(6)-[(R)-dihydrolipoyl]-L-lysyl-[protein] + 4 Fe(3+) + 2 hydrogen sulfide + 2 5'-deoxyadenosine + 2 L-methionine + 2 reduced [2Fe-2S]-[ferredoxin]. The protein operates within protein modification; protein lipoylation via endogenous pathway; protein N(6)-(lipoyl)lysine from octanoyl-[acyl-carrier-protein]: step 2/2. In terms of biological role, catalyzes the radical-mediated insertion of two sulfur atoms into the C-6 and C-8 positions of the octanoyl moiety bound to the lipoyl domains of lipoate-dependent enzymes, thereby converting the octanoylated domains into lipoylated derivatives. This chain is Lipoyl synthase, found in Porphyromonas gingivalis (strain ATCC BAA-308 / W83).